Here is a 267-residue protein sequence, read N- to C-terminus: 2-keto-3-deoxy-L-rhamnonate aldolase (267 aa).

Histidine 49 serves as the catalytic Proton acceptor. Glutamine 151 is a substrate binding site. Mg(2+) is bound at residue glutamate 153. Positions 178 and 179 each coordinate substrate. Mg(2+) is bound at residue aspartate 179.

It belongs to the HpcH/HpaI aldolase family. KDR aldolase subfamily. As to quaternary structure, homohexamer. Mg(2+) serves as cofactor.

It carries out the reaction 2-dehydro-3-deoxy-L-rhamnonate = (S)-lactaldehyde + pyruvate. In terms of biological role, catalyzes the reversible retro-aldol cleavage of 2-keto-3-deoxy-L-rhamnonate (KDR) to pyruvate and lactaldehyde. The polypeptide is 2-keto-3-deoxy-L-rhamnonate aldolase (Salmonella enteritidis PT4 (strain P125109)).